The sequence spans 613 residues: Probable potassium transport system protein Kup 1 (613 aa).

12 helical membrane-spanning segments follow: residues 40–60 (VLSMLFWSMTLVVSIKYVVFV), 93–113 (MLLGLLGASMFYGDAVITPAI), 127–147 (PALQPWVLPLSLIVLVGLFLL), 158–178 (LFGPVMLFWFVLLGLIGLFSV), 201–221 (AVQAFIVFGSVFLALTGAEAL), 237–257 (WFYIAMPCLLLNYFGQGALLL), 266–286 (PFFLLMPTWAVAPTIVLATAA), 288–308 (VIASQAVISGAFSMTAQAVHL), 327–347 (IYVPVVNYALLLLVVAVVLAF), 356–376 (AYGIAVTTTMLLTTGLVTVVM), 384–404 (LPAVALLGTVFLAVDLSFFGA), and 409–429 (VAAGGWFPLLLGGLIFFLMVT).

This sequence belongs to the HAK/KUP transporter (TC 2.A.72) family.

The protein localises to the cell inner membrane. The catalysed reaction is K(+)(in) + H(+)(in) = K(+)(out) + H(+)(out). Transport of potassium into the cell. Likely operates as a K(+):H(+) symporter. The polypeptide is Probable potassium transport system protein Kup 1 (Ralstonia nicotianae (strain ATCC BAA-1114 / GMI1000) (Ralstonia solanacearum)).